A 416-amino-acid polypeptide reads, in one-letter code: CCA-adding enzyme (416 aa).

Residues Ser-42 and Lys-45 each contribute to the ATP site. Positions 42 and 45 each coordinate CTP. Positions 54, 56, and 107 each coordinate Mg(2+). Residues His-130, Lys-150, and Tyr-159 each contribute to the ATP site. Residues His-130, Lys-150, and Tyr-159 each coordinate CTP.

It belongs to the tRNA nucleotidyltransferase/poly(A) polymerase family. Archaeal CCA-adding enzyme subfamily. In terms of assembly, homodimer. The cofactor is Mg(2+).

It carries out the reaction a tRNA precursor + 2 CTP + ATP = a tRNA with a 3' CCA end + 3 diphosphate. It catalyses the reaction a tRNA with a 3' CCA end + 2 CTP + ATP = a tRNA with a 3' CCACCA end + 3 diphosphate. Functionally, catalyzes the addition and repair of the essential 3'-terminal CCA sequence in tRNAs without using a nucleic acid template. Adds these three nucleotides in the order of C, C, and A to the tRNA nucleotide-73, using CTP and ATP as substrates and producing inorganic pyrophosphate. tRNA 3'-terminal CCA addition is required both for tRNA processing and repair. Also involved in tRNA surveillance by mediating tandem CCA addition to generate a CCACCA at the 3' terminus of unstable tRNAs. While stable tRNAs receive only 3'-terminal CCA, unstable tRNAs are marked with CCACCA and rapidly degraded. In Sulfolobus acidocaldarius (strain ATCC 33909 / DSM 639 / JCM 8929 / NBRC 15157 / NCIMB 11770), this protein is CCA-adding enzyme.